We begin with the raw amino-acid sequence, 264 residues long: Thiazole synthase (264 aa).

Lysine 98 acts as the Schiff-base intermediate with DXP in catalysis. Residues glycine 159, 185–186 (AG), and 207–208 (AT) each bind 1-deoxy-D-xylulose 5-phosphate.

Belongs to the ThiG family. Homotetramer. Forms heterodimers with either ThiH or ThiS.

The protein resides in the cytoplasm. It catalyses the reaction [ThiS sulfur-carrier protein]-C-terminal-Gly-aminoethanethioate + 2-iminoacetate + 1-deoxy-D-xylulose 5-phosphate = [ThiS sulfur-carrier protein]-C-terminal Gly-Gly + 2-[(2R,5Z)-2-carboxy-4-methylthiazol-5(2H)-ylidene]ethyl phosphate + 2 H2O + H(+). Its pathway is cofactor biosynthesis; thiamine diphosphate biosynthesis. In terms of biological role, catalyzes the rearrangement of 1-deoxy-D-xylulose 5-phosphate (DXP) to produce the thiazole phosphate moiety of thiamine. Sulfur is provided by the thiocarboxylate moiety of the carrier protein ThiS. In vitro, sulfur can be provided by H(2)S. This is Thiazole synthase from Mycobacterium ulcerans (strain Agy99).